An 84-amino-acid polypeptide reads, in one-letter code: MERGSRKTRVGRVVSDKMDKTVVVLVEDFVRHPLYGKAMKRTNKFKTHDELNECGIGDKVKIMETKPLSKDKRWRLVQIVQKAK.

It belongs to the universal ribosomal protein uS17 family. As to quaternary structure, part of the 30S ribosomal subunit.

In terms of biological role, one of the primary rRNA binding proteins, it binds specifically to the 5'-end of 16S ribosomal RNA. This chain is Small ribosomal subunit protein uS17, found in Alkaliphilus metalliredigens (strain QYMF).